Consider the following 331-residue polypeptide: Probable cyclic nucleotide synthase IK1_05630 (331 aa).

The protein belongs to the CD-NTase family. D12 subfamily.

Cyclic nucleotide synthase (second messenger synthase) of a CBASS antivirus system. CBASS (cyclic oligonucleotide-based antiphage signaling system) provides immunity against bacteriophage. The CD-NTase protein synthesizes cyclic nucleotides in response to infection; these serve as specific second messenger signals. The signals activate a diverse range of effectors, leading to bacterial cell death and thus abortive phage infection. A type I-B CBASS system. Functionally, probably a cyclic nucleotide synthase that makes second messenger nucleotide which activates a CBASS antiviral defense system. In terms of biological role, protects B.subtilis against phage infection. When IK1_05630 and IK1_05631 are introduced in B.subtilis BEST7003 there is 1000-fold protection against phage SBSphiC. Both genes are required for protection. Activation leads to bacterial cell lysis and death, which occurs before the phage has finished its replication cycle, thus protecting non-infected bacteria by aborting the phage infection and preventing its propagation. This chain is Probable cyclic nucleotide synthase IK1_05630, found in Bacillus cereus (strain VD146).